Here is a 583-residue protein sequence, read N- to C-terminus: Pyruvate kinase isozyme A, chloroplastic (583 aa).

The N-terminal 74 residues, 1–74, are a transit peptide targeting the chloroplast; sequence MSQSLHFSPN…NSGVLYNNNN (74 aa). Low complexity predominate over residues 43–52; it reads KASTSPSSSS. A disordered region spans residues 43–75; that stretch reads KASTSPSSSSDPQVLVADNGTGNSGVLYNNNNK. The span at 62–75 shows a compositional bias: polar residues; that stretch reads GTGNSGVLYNNNNK. Position 134 (R134) interacts with substrate. K(+)-binding residues include N136, D168, and T169. 136 to 139 contacts ATP; the sequence is NMCH. E333 provides a ligand contact to Mg(2+). Residues G356, D357, and S389 each coordinate substrate. D357 is a Mg(2+) binding site.

The protein belongs to the pyruvate kinase family. As to quaternary structure, oligomer of alpha and beta subunits. Requires Mg(2+) as cofactor. K(+) serves as cofactor.

It is found in the plastid. Its subcellular location is the chloroplast. The enzyme catalyses pyruvate + ATP = phosphoenolpyruvate + ADP + H(+). It participates in carbohydrate degradation; glycolysis; pyruvate from D-glyceraldehyde 3-phosphate: step 5/5. This chain is Pyruvate kinase isozyme A, chloroplastic, found in Ricinus communis (Castor bean).